Here is a 467-residue protein sequence, read N- to C-terminus: Probable tryptophanase (467 aa).

The residue at position 263 (Lys263) is an N6-(pyridoxal phosphate)lysine.

This sequence belongs to the beta-eliminating lyase family. Pyridoxal 5'-phosphate is required as a cofactor.

It carries out the reaction L-tryptophan + H2O = indole + pyruvate + NH4(+). Its pathway is amino-acid degradation; L-tryptophan degradation via pyruvate pathway; indole and pyruvate from L-tryptophan: step 1/1. The chain is Probable tryptophanase (tnaA) from Aeropyrum pernix (strain ATCC 700893 / DSM 11879 / JCM 9820 / NBRC 100138 / K1).